The primary structure comprises 312 residues: Phosphoribosylaminoimidazole-succinocarboxamide synthase (312 aa).

Belongs to the SAICAR synthetase family.

The enzyme catalyses 5-amino-1-(5-phospho-D-ribosyl)imidazole-4-carboxylate + L-aspartate + ATP = (2S)-2-[5-amino-1-(5-phospho-beta-D-ribosyl)imidazole-4-carboxamido]succinate + ADP + phosphate + 2 H(+). Its pathway is purine metabolism; IMP biosynthesis via de novo pathway; 5-amino-1-(5-phospho-D-ribosyl)imidazole-4-carboxamide from 5-amino-1-(5-phospho-D-ribosyl)imidazole-4-carboxylate: step 1/2. In Legionella pneumophila (strain Lens), this protein is Phosphoribosylaminoimidazole-succinocarboxamide synthase.